The chain runs to 271 residues: Cyclic AMP-dependent transcription factor ATF-1 (271 aa).

The tract at residues 1–61 (MEDSHKSTTS…QKAHGILARR (61 aa)) is disordered. Positions 31 to 90 (QVSSLSESEESQDSSDSIGSSQKAHGILARRPSYRKILKDLSSEDTRGRKGDGENSGVSA) constitute a KID domain. Serine 63 bears the Phosphoserine; by CaMK1, CDK3, RPS6KA4 and RPS6KA5 mark. Serine 198 is subject to Phosphoserine; by HIPK2. Glycyl lysine isopeptide (Lys-Gly) (interchain with G-Cter in SUMO2) cross-links involve residues lysine 208 and lysine 215. A bZIP domain is found at 213–271 (QLKREIRLMKNREAARECRRKKKEYVKCLENRVAVLENQNKTLIEELKTLKDLYSNKSV). Residues 215 to 239 (KREIRLMKNREAARECRRKKKEYVK) form a basic motif region. The segment at 241–262 (LENRVAVLENQNKTLIEELKTL) is leucine-zipper.

It belongs to the bZIP family. ATF subfamily. Binds DNA as a dimer. Interacts with HIPK2 and CDK3. Interacts with MOTS-c, a peptide produced by the mitochondrially encoded 12S rRNA MT-RNR1; the interaction occurs in the nucleus following metabolic stress. In terms of processing, phosphorylated at Ser-198 by HIPK2 in response to genotoxic stress. This phosphorylation promotes transcription repression of FTH1 and other antioxidant detoxification genes. The CDK3-mediated phosphorylation at Ser-63 promotes its transactivation and transcriptional activities. Phosphorylated at Ser-63 by RPS6KA4 and RPS6KA5 in response to mitogenic or stress stimuli.

It is found in the nucleus. This protein binds the cAMP response element (CRE) (consensus: 5'-GTGACGT[AC][AG]-3'), a sequence present in many viral and cellular promoters. Binds to the Tax-responsive element (TRE) of HTLV-I. Mediates PKA-induced stimulation of CRE-reporter genes. Represses the expression of FTH1 and other antioxidant detoxification genes. Triggers cell proliferation and transformation. The sequence is that of Cyclic AMP-dependent transcription factor ATF-1 (ATF1) from Homo sapiens (Human).